The following is a 76-amino-acid chain: Lividin-2 (76 aa).

Positions 1–22 (MFTLKKSLLLLFFLGTISLSLC) are cleaved as a signal peptide. The propeptide occupies 23–41 (QEERNADEEDGGEVTEEEV). An intrachain disulfide couples Cys-70 to Cys-76.

As to expression, expressed by the skin glands.

The protein resides in the secreted. Its function is as follows. Antimicrobial peptide. The chain is Lividin-2 from Odorrana livida (Green mountain frog).